An 82-amino-acid chain; its full sequence is Small ribosomal subunit protein bS16c (82 aa).

Belongs to the bacterial ribosomal protein bS16 family.

It is found in the plastid. It localises to the chloroplast. The chain is Small ribosomal subunit protein bS16c from Pyropia yezoensis (Susabi-nori).